The primary structure comprises 236 residues: MTATFNCFVTGTDTEIGKTMISTALLHALVQQGVKAAAIKSVAAGATAIQTNEGEVWHNDDADALAQAANVVLPRELATPYLLHEACAPHVSAELQGVAIDIAHIKNCYVQVREMAEAVVVEGVGGFRVPLSDHADTADLARELALPVIMVVGLRLGCLNHALLTADAIAARGLKLVGWVANTVDAGMPFAEDNVAALAARLSAPLLGCVPRLAAPLPAAAAAYLDFSCLPNWPKA.

Thr19 is a Mg(2+) binding site. Lys40 is an active-site residue. Residues Asp61 and Glu122 each coordinate Mg(2+). Residues Asp61, 122-125 (EGVG), 182-183 (NT), and 211-213 (PRL) contribute to the ATP site.

Belongs to the dethiobiotin synthetase family. As to quaternary structure, homodimer. The cofactor is Mg(2+).

Its subcellular location is the cytoplasm. It carries out the reaction (7R,8S)-7,8-diammoniononanoate + CO2 + ATP = (4R,5S)-dethiobiotin + ADP + phosphate + 3 H(+). The protein operates within cofactor biosynthesis; biotin biosynthesis; biotin from 7,8-diaminononanoate: step 1/2. Catalyzes a mechanistically unusual reaction, the ATP-dependent insertion of CO2 between the N7 and N8 nitrogen atoms of 7,8-diaminopelargonic acid (DAPA, also called 7,8-diammoniononanoate) to form a ureido ring. This chain is ATP-dependent dethiobiotin synthetase BioD, found in Janthinobacterium sp. (strain Marseille) (Minibacterium massiliensis).